Consider the following 341-residue polypeptide: MMSRYEELRKELPAQPKVWLITGVAGFIGSNLLETLLKLDQKVVGLDNFATGHQRNLDEVRSLVSEKQWSNFKFIQGDIRNLDDCNNACAGVDYVLHQAALGSVPRSINDPITSNATNIDGFLNMLIAARDAKVQSFTYAASSSTYGDHPGLPKVEDTIGKPLSPYAVTKYVNELYADVFSRCYGFSTIGLRYFNVFGRRQDPNGAYAAVIPKWTSSMIQGDDVYINGDGETSRDFCYIENTVQANLLAATAGLDARNQVYNIAVGGRTSLNQLFFALRDGLAENGVSYHREPVYRDFREGDVRHSLADISKAAKLLGYAPKYDVSAGVALAMPWYIMFLK.

Phe27, Ile28, Asp47, Ala50, Thr51, Gly52, Asp78, Ile79, and Gln98 together coordinate NAD(+). Ser103 is a binding site for UDP-N-acetyl-alpha-D-galactosamine. Residue Thr117 coordinates NAD(+). UDP-N-acetyl-alpha-D-galactosamine is bound by residues Ser142, Ser143, and Tyr166. 2 residues coordinate NAD(+): Tyr166 and Lys170. Catalysis depends on Tyr166, which acts as the Proton acceptor. Position 195 (Asn195) interacts with UDP-N-acetyl-alpha-D-galactosamine. Val196 is a binding site for NAD(+). 6 residues coordinate UDP-N-acetyl-alpha-D-galactosamine: Val210, Tyr225, Asn227, Arg234, Arg299, and Asp302.

This sequence belongs to the NAD(P)-dependent epimerase/dehydratase family. As to quaternary structure, homodimer. It depends on NAD(+) as a cofactor.

The catalysed reaction is UDP-2-acetamido-2-deoxy-alpha-D-glucuronate = UDP-2-acetamido-2-deoxy-alpha-D-galacturonate. It catalyses the reaction UDP-N-acetyl-alpha-D-glucosamine = UDP-N-acetyl-alpha-D-galactosamine. The protein operates within bacterial outer membrane biogenesis; LPS O-antigen biosynthesis. Epimerase required for the biosynthesis of the B-band O antigen of serotype O6 lipopolysaccharide. Catalyzes the reversible epimerization of UDP-N-acetylglucosaminuronic acid (UDP-GlcNAcA) to UDP-N-acetylgalactosaminuronic acid (UDP-GalNAcA). Also catalyzes the reversible epimerization of UDP-N-acetylglucosamine (UDP-GlcNAc) to UDP-N-acetylgalactosamine (UDP-GalNAc). Has very low epimerase activity with UDP-glucose (UDP-Glc) and UDP-galactose (UDP-Gal). This chain is UDP-N-acetyl-alpha-D-glucosaminouronate 4-epimerase, found in Pseudomonas aeruginosa.